The sequence spans 251 residues: 2,3-bisphosphoglycerate-dependent phosphoglycerate mutase (251 aa).

Substrate contacts are provided by residues 8-15 (RHGESLWN), 21-22 (TG), Arg60, 87-90 (ERHY), Lys98, 114-115 (RR), and 183-184 (GN). His9 serves as the catalytic Tele-phosphohistidine intermediate. The Proton donor/acceptor role is filled by Glu87.

This sequence belongs to the phosphoglycerate mutase family. BPG-dependent PGAM subfamily.

It carries out the reaction (2R)-2-phosphoglycerate = (2R)-3-phosphoglycerate. Its pathway is carbohydrate degradation; glycolysis; pyruvate from D-glyceraldehyde 3-phosphate: step 3/5. Functionally, catalyzes the interconversion of 2-phosphoglycerate and 3-phosphoglycerate. The polypeptide is 2,3-bisphosphoglycerate-dependent phosphoglycerate mutase (Thermoanaerobacter sp. (strain X514)).